Consider the following 386-residue polypeptide: Succinate--CoA ligase [ADP-forming] subunit beta (386 aa).

Positions Lys-9–Glu-244 constitute an ATP-grasp domain. ATP-binding positions include Lys-46, Gly-53–Gly-55, Glu-99, Ala-102, and Glu-107. Residues Asn-199 and Asp-213 each contribute to the Mg(2+) site. Residues Asn-264 and Gly-321–Met-323 contribute to the substrate site.

Belongs to the succinate/malate CoA ligase beta subunit family. Heterotetramer of two alpha and two beta subunits. Mg(2+) is required as a cofactor.

The enzyme catalyses succinate + ATP + CoA = succinyl-CoA + ADP + phosphate. It carries out the reaction GTP + succinate + CoA = succinyl-CoA + GDP + phosphate. The protein operates within carbohydrate metabolism; tricarboxylic acid cycle; succinate from succinyl-CoA (ligase route): step 1/1. Its function is as follows. Succinyl-CoA synthetase functions in the citric acid cycle (TCA), coupling the hydrolysis of succinyl-CoA to the synthesis of either ATP or GTP and thus represents the only step of substrate-level phosphorylation in the TCA. The beta subunit provides nucleotide specificity of the enzyme and binds the substrate succinate, while the binding sites for coenzyme A and phosphate are found in the alpha subunit. This Bordetella pertussis (strain Tohama I / ATCC BAA-589 / NCTC 13251) protein is Succinate--CoA ligase [ADP-forming] subunit beta.